We begin with the raw amino-acid sequence, 438 residues long: MLNYDIAVIGGGIAGYCAALNAIEAGKKTVLISQGQSALHFSSGSIDVMAKTPSGERVEAPFSAMASLPQQHPEHPYSKMSPNFVRQSLYWLVDQLKEQGLPLHCQQDESNHHRITPLGTLKATWLSQPFVYQHRQNVAFKRLLFVAVDGYRDFQPLLAKDNLKKHPDFQHCEIGEIQVTIPGCEALRRNPNELRSIDIARLLKQPQAFNSLCHQLMKHATQEDLVIMPAIMGNGDGLVLLQQLRRQTNLTLHEVPTMPPSLLGIRIEEALQKRFLKQGGVLLKGDQVLSGEWDAQGHLVSISTRNLGDIPLHANAYILASGSYFSQGLKASLDKIVEPIFGLDMVAKPHRRQWRNDQFFSASAHPFMAFGVETDAMFRPSLNGQVCQNLYCCGSVLSGYDPVFEGSGGGVAVSTALAAVQRAMGLKQAMSVEEECVL.

Belongs to the anaerobic G-3-P dehydrogenase subunit B family. In terms of assembly, composed of a catalytic GlpA/B dimer and of membrane bound GlpC. Requires FMN as cofactor.

The enzyme catalyses a quinone + sn-glycerol 3-phosphate = dihydroxyacetone phosphate + a quinol. Its pathway is polyol metabolism; glycerol degradation via glycerol kinase pathway; glycerone phosphate from sn-glycerol 3-phosphate (anaerobic route): step 1/1. Conversion of glycerol 3-phosphate to dihydroxyacetone. Uses fumarate or nitrate as electron acceptor. This Vibrio vulnificus (strain YJ016) protein is Anaerobic glycerol-3-phosphate dehydrogenase subunit B.